A 506-amino-acid polypeptide reads, in one-letter code: Maturase K (506 aa).

Belongs to the intron maturase 2 family. MatK subfamily.

The protein localises to the plastid. Its subcellular location is the chloroplast. Functionally, usually encoded in the trnK tRNA gene intron. Probably assists in splicing its own and other chloroplast group II introns. The protein is Maturase K of Austrosteenisia blackii (Blood vine).